Reading from the N-terminus, the 2243-residue chain is Zinc finger FYVE domain-containing protein 26 homolog (2243 aa).

Disordered stretches follow at residues 386–416 (SQRKGEDGENDEEDDEQYVDDDVASPPRPTA) and 514–556 (KKKA…GKAS). The segment covering 393–408 (GENDEEDDEQYVDDDV) has biased composition (acidic residues). The residue at position 403 (Y403) is a Phosphotyrosine. Basic and acidic residues predominate over residues 517–528 (ASSDDESRERSN). The segment covering 534-543 (NRRKARRQRR) has biased composition (basic residues). Residues 617 to 644 (KKIIETFHLEHSQLNRELHFMEQQQLVK) form an LRR 1 repeat. At S1424 the chain carries Phosphoserine. An FYVE-type zinc finger spans residues 1444-1500 (DEEASHCMCCRRAAFTMLMRRHHCRRCGRVVCYACSTHRIRIPELYDELEVRICNDC). Zn(2+)-binding residues include C1450, C1453, C1467, C1470, C1475, C1478, C1497, and C1500. Residues 1505–1534 (TPAKDQGDGTSSERSAISGQVSKSSGRSDS) form a disordered region. Residues 1512 to 1534 (DGTSSERSAISGQVSKSSGRSDS) show a composition bias toward polar residues. The stretch at 1887–1912 (YPQLANGGLNVLMDELQQLDDAQFTA) is one LRR 2 repeat.

It belongs to the ZFYVE26 family.

In terms of biological role, phosphatidylinositol 3-phosphate (PtdIns[3]P)-binding protein. Involved in autophagy. This chain is Zinc finger FYVE domain-containing protein 26 homolog, found in Drosophila melanogaster (Fruit fly).